Consider the following 1139-residue polypeptide: Protein kinase C-like (1139 aa).

Positions 1 to 67 (MNEDEAIQNI…LRDIQLRKVG (67 aa)) constitute an REM-1 1 domain. Positions 72 to 132 (GMSLGADDAG…PGPGAASKAR (61 aa)) are disordered. Residues 142 to 219 (KYDTPYLGPR…LKRYEELHVD (78 aa)) enclose the REM-1 2 domain. Positions 225–343 (AQDDDSINTP…MRRKRIEAEM (119 aa)) constitute a C2 domain. The segment at 349–404 (VSADRMGSTGAPSQFPMSPTSGSFGGSPQAPGGGQGQAPGPFGDPAPQPQVVTGPI) is disordered. A compositionally biased stretch (polar residues) spans 358–368 (GAPSQFPMSPT). 2 consecutive Phorbol-ester/DAG-type zinc fingers follow at residues 454 to 502 (GHKF…VTKC) and 522 to 572 (PHRF…PDFC). 3 disordered regions span residues 590 to 637 (KQRQ…TPSA), 649 to 668 (QTSP…LSAA), and 679 to 804 (QGRT…TDPG). The segment covering 594–614 (QKTTSLSEKTLRSGATKSPTT) has biased composition (polar residues). The span at 615-629 (AGHGSSASFSSAGAG) shows a compositional bias: low complexity. Composition is skewed to pro residues over residues 723–734 (AQPPAQQRPPQP) and 743–760 (AQMP…PPQP). Positions 761–793 (GQQYQQQQPAAQKPQPQPPATAQGAAAGPPGSQ) are enriched in low complexity. A Protein kinase domain is found at 814-1073 (FNFLAVLGKG…AQEVMSQPFF (260 aa)). Residues 820-828 (LGKGNFGKV) and lysine 843 contribute to the ATP site. The active-site Proton acceptor is the aspartate 939. The region spanning 1074 to 1139 (RNINWDDIYH…RGFSYTADLD (66 aa)) is the AGC-kinase C-terminal domain.

The protein belongs to the protein kinase superfamily. AGC Ser/Thr protein kinase family. PKC subfamily.

The catalysed reaction is L-seryl-[protein] + ATP = O-phospho-L-seryl-[protein] + ADP + H(+). It catalyses the reaction L-threonyl-[protein] + ATP = O-phospho-L-threonyl-[protein] + ADP + H(+). Stimulated about twofold by phospholipids or phorbol esters. The protein is Protein kinase C-like (pkc1) of Hypocrea jecorina (Trichoderma reesei).